Reading from the N-terminus, the 98-residue chain is Small ribosomal subunit protein eS24 (98 aa).

Belongs to the eukaryotic ribosomal protein eS24 family.

In Thermococcus onnurineus (strain NA1), this protein is Small ribosomal subunit protein eS24.